A 279-amino-acid chain; its full sequence is Tryptophan 2,3-dioxygenase (279 aa).

Substrate-binding positions include 48-52 (FIVIH), tyrosine 110, and arginine 114. Residue histidine 237 participates in heme binding. Residue threonine 251 coordinates substrate.

It belongs to the tryptophan 2,3-dioxygenase family. In terms of assembly, homotetramer. Requires heme as cofactor.

It carries out the reaction L-tryptophan + O2 = N-formyl-L-kynurenine. It participates in amino-acid degradation; L-tryptophan degradation via kynurenine pathway; L-kynurenine from L-tryptophan: step 1/2. Heme-dependent dioxygenase that catalyzes the oxidative cleavage of the L-tryptophan (L-Trp) pyrrole ring and converts L-tryptophan to N-formyl-L-kynurenine. Catalyzes the oxidative cleavage of the indole moiety. This chain is Tryptophan 2,3-dioxygenase, found in Bacillus thuringiensis subsp. konkukian (strain 97-27).